A 239-amino-acid chain; its full sequence is Orotidine 5'-phosphate decarboxylase (239 aa).

Substrate-binding positions include aspartate 11, lysine 33, 60–69, threonine 123, arginine 185, glutamine 194, glycine 214, and arginine 215; that span reads DLKCHDIPTT. Catalysis depends on lysine 62, which acts as the Proton donor.

This sequence belongs to the OMP decarboxylase family. Type 1 subfamily. Homodimer.

The catalysed reaction is orotidine 5'-phosphate + H(+) = UMP + CO2. The protein operates within pyrimidine metabolism; UMP biosynthesis via de novo pathway; UMP from orotate: step 2/2. Catalyzes the decarboxylation of orotidine 5'-monophosphate (OMP) to uridine 5'-monophosphate (UMP). In Bacillus licheniformis (strain ATCC 14580 / DSM 13 / JCM 2505 / CCUG 7422 / NBRC 12200 / NCIMB 9375 / NCTC 10341 / NRRL NRS-1264 / Gibson 46), this protein is Orotidine 5'-phosphate decarboxylase.